Here is a 486-residue protein sequence, read N- to C-terminus: Cardiolipin synthase A (486 aa).

The next 2 membrane-spanning stretches (helical) occupy residues 3 to 23 and 38 to 58; these read TFYT…IAGV and MAWL…YLSF. 2 PLD phosphodiesterase domains span residues 219–246 and 399–426; these read MDLR…VDPR and EGGL…DMRS. Residues His-224, Lys-226, Asp-231, His-404, Lys-406, and Asp-411 contribute to the active site.

It belongs to the phospholipase D family. Cardiolipin synthase subfamily. ClsA sub-subfamily.

It localises to the cell inner membrane. The catalysed reaction is 2 a 1,2-diacyl-sn-glycero-3-phospho-(1'-sn-glycerol) = a cardiolipin + glycerol. Its function is as follows. Catalyzes the reversible phosphatidyl group transfer from one phosphatidylglycerol molecule to another to form cardiolipin (CL) (diphosphatidylglycerol) and glycerol. The polypeptide is Cardiolipin synthase A (Citrobacter koseri (strain ATCC BAA-895 / CDC 4225-83 / SGSC4696)).